The chain runs to 561 residues: Arginine--tRNA ligase (561 aa).

Residues 128–138 (ANPTGPLHVGH) carry the 'HIGH' region motif.

The protein belongs to the class-I aminoacyl-tRNA synthetase family. As to quaternary structure, monomer.

It localises to the cytoplasm. The catalysed reaction is tRNA(Arg) + L-arginine + ATP = L-arginyl-tRNA(Arg) + AMP + diphosphate. In Chromohalobacter salexigens (strain ATCC BAA-138 / DSM 3043 / CIP 106854 / NCIMB 13768 / 1H11), this protein is Arginine--tRNA ligase.